A 390-amino-acid polypeptide reads, in one-letter code: Putative gustatory receptor 59d (390 aa).

Residues Met1–Gly38 lie on the Cytoplasmic side of the membrane. A helical membrane pass occupies residues Ala39–Met59. Over Arg60–His75 the chain is Extracellular. A helical transmembrane segment spans residues Glu76 to Ser96. Topologically, residues Arg97 to Ser128 are cytoplasmic. Residues Ile129–Ala149 form a helical membrane-spanning segment. The Extracellular segment spans residues Met150 to Ser156. A helical membrane pass occupies residues Ile157–Ile177. Residues Thr178–Val252 are Cytoplasmic-facing. The chain crosses the membrane as a helical span at residues Val253–Ile273. Residues Ser274–Leu283 are Extracellular-facing. Residues Leu284–Ile304 form a helical membrane-spanning segment. At Asn305–Gly366 the chain is on the cytoplasmic side. A helical membrane pass occupies residues Thr367–Ile383. Over Gln384–Phe390 the chain is Extracellular.

This sequence belongs to the insect chemoreceptor superfamily. Gustatory receptor (GR) family. Gr22e subfamily. As to expression, expressed in the adult labellar chemosensory neurons. In larvae, is expressed in neurons of the terminal external chemosensory organ as well as in the dorsal pharyngeal sense organ.

It is found in the cell membrane. Its function is as follows. Probable gustatory receptor which mediates acceptance or avoidance behavior, depending on its substrates. The sequence is that of Putative gustatory receptor 59d (Gr59d) from Drosophila melanogaster (Fruit fly).